The chain runs to 518 residues: Filamentous growth regulator 15 (518 aa).

Residues 1 to 41 (MESTLSVSDEKLTNSSTALNNCGDNKESSQVLTTANTTTDN) are compositionally biased toward polar residues. Disordered stretches follow at residues 1–63 (MEST…SKER), 75–101 (VDPN…DHGK), and 261–307 (KSRS…KQHR). The segment covering 42–52 (QQVQPKSQHQQ) has biased composition (low complexity). The span at 77 to 95 (PNQQSKNTVSDSVQDTTGV) shows a compositional bias: polar residues. Basic residues predominate over residues 262–274 (SRSRSKVTKKRKV). The span at 283-298 (SNTATATTSVTTPDAN) shows a compositional bias: low complexity. The C2H2-type zinc finger occupies 374-406 (HECQLPSAEEPHKLCLRRFSRKYELIRHQETVH). Residues 492–518 (RKSSGDDTNYMETSDLESGEEEVTFNK) are disordered. Over residues 505-518 (SDLESGEEEVTFNK) the composition is skewed to acidic residues.

The protein localises to the nucleus. Its function is as follows. Probable transcription factor involved in the regulation of filamentous growth. This Candida albicans (strain SC5314 / ATCC MYA-2876) (Yeast) protein is Filamentous growth regulator 15 (FGR15).